A 122-amino-acid polypeptide reads, in one-letter code: Urocortin (122 aa).

A signal peptide spans methionine 1–glutamine 25. Residues tryptophan 26 to arginine 80 constitute a propeptide that is removed on maturation. Residue valine 120 is modified to Valine amide.

It belongs to the sauvagine/corticotropin-releasing factor/urotensin I family. As to quaternary structure, interacts with CRHR1 and CRHR2 (via their N-terminal extracellular domain). In the organ of Corti, detected in the inner hair cell region (at protein level). Expressed in skin (at protein level).

Its subcellular location is the secreted. Functionally, acts in vitro to stimulate the secretion of adrenocorticotropic hormone (ACTH). Binds with high affinity to CRF receptor types 1, 2-alpha, and 2-beta. Plays a role in the establishment of normal hearing thresholds. Reduces food intake and regulates ghrelin levels in gastric body and plasma. The chain is Urocortin (Ucn) from Mus musculus (Mouse).